Consider the following 252-residue polypeptide: 3-deoxy-manno-octulosonate cytidylyltransferase (252 aa).

This sequence belongs to the KdsB family.

The protein localises to the cytoplasm. The enzyme catalyses 3-deoxy-alpha-D-manno-oct-2-ulosonate + CTP = CMP-3-deoxy-beta-D-manno-octulosonate + diphosphate. The protein operates within nucleotide-sugar biosynthesis; CMP-3-deoxy-D-manno-octulosonate biosynthesis; CMP-3-deoxy-D-manno-octulosonate from 3-deoxy-D-manno-octulosonate and CTP: step 1/1. It functions in the pathway bacterial outer membrane biogenesis; lipopolysaccharide biosynthesis. Its function is as follows. Activates KDO (a required 8-carbon sugar) for incorporation into bacterial lipopolysaccharide in Gram-negative bacteria. The polypeptide is 3-deoxy-manno-octulosonate cytidylyltransferase (Phocaeicola vulgatus (strain ATCC 8482 / DSM 1447 / JCM 5826 / CCUG 4940 / NBRC 14291 / NCTC 11154) (Bacteroides vulgatus)).